The chain runs to 617 residues: Dihydroxy-acid dehydratase (617 aa).

Aspartate 81 contacts Mg(2+). Residue cysteine 122 participates in [2Fe-2S] cluster binding. Residues aspartate 123 and lysine 124 each contribute to the Mg(2+) site. Position 124 is an N6-carboxylysine (lysine 124). Residue cysteine 197 participates in [2Fe-2S] cluster binding. Glutamate 494 is a Mg(2+) binding site. Residue serine 520 is the Proton acceptor of the active site.

It belongs to the IlvD/Edd family. As to quaternary structure, homodimer. [2Fe-2S] cluster serves as cofactor. The cofactor is Mg(2+).

The catalysed reaction is (2R)-2,3-dihydroxy-3-methylbutanoate = 3-methyl-2-oxobutanoate + H2O. It carries out the reaction (2R,3R)-2,3-dihydroxy-3-methylpentanoate = (S)-3-methyl-2-oxopentanoate + H2O. It participates in amino-acid biosynthesis; L-isoleucine biosynthesis; L-isoleucine from 2-oxobutanoate: step 3/4. It functions in the pathway amino-acid biosynthesis; L-valine biosynthesis; L-valine from pyruvate: step 3/4. Functions in the biosynthesis of branched-chain amino acids. Catalyzes the dehydration of (2R,3R)-2,3-dihydroxy-3-methylpentanoate (2,3-dihydroxy-3-methylvalerate) into 2-oxo-3-methylpentanoate (2-oxo-3-methylvalerate) and of (2R)-2,3-dihydroxy-3-methylbutanoate (2,3-dihydroxyisovalerate) into 2-oxo-3-methylbutanoate (2-oxoisovalerate), the penultimate precursor to L-isoleucine and L-valine, respectively. The polypeptide is Dihydroxy-acid dehydratase (Frankia casuarinae (strain DSM 45818 / CECT 9043 / HFP020203 / CcI3)).